A 39-amino-acid polypeptide reads, in one-letter code: Phosphate starvation-inducible protein 1 (39 aa).

The protein localises to the cell outer membrane. The protein is Phosphate starvation-inducible protein 1 of Pseudomonas fluorescens.